The sequence spans 379 residues: MGIKGLTKLLADNAPKAMKEQKFESYFGRKIAVDASMSIYQFLIVVGRTGMETLTNEAGEVTSHLQGMFNRTIRLLEAGIKPVYVFDGKPPDMKKQELAKRYSKRDDATKDLTEAVEVGDKDAIEKLSKRTVKVTRQHNEDCKRLLRLMGVPVVEAPSEAEAECAALCINDKVFAVASEDMDSLTFGAPRFLRHLMDPSSKKIPVMEFDVAKVLEELELTMDQFIDLCILCGCDYCDSIKGIGGQTALKLIRQHGSIESILENLNKDRYQIPEDWPYQEARRLFKEPNVTLDIPELKWTAPDEEGLISFLVKDNGFNEDRVTKAIEKIKSAKNKSSQGRLESFFKPTATTSAPLKRKETSDKTSKAAANKKTKAGGKKK.

The tract at residues 1 to 105 (MGIKGLTKLL…QELAKRYSKR (105 aa)) is N-domain. D34 serves as a coordination point for Mg(2+). DNA is bound at residue R71. 5 residues coordinate Mg(2+): D87, E159, E161, D180, and D182. The segment at 123–254 (AIEKLSKRTV…QTALKLIRQH (132 aa)) is I-domain. DNA is bound at residue E159. Residues G232 and D234 each contribute to the DNA site. D234 provides a ligand contact to Mg(2+). The segment at 331–379 (AKNKSSQGRLESFFKPTATTSAPLKRKETSDKTSKAAANKKTKAGGKKK) is disordered. The interaction with PCNA stretch occupies residues 336-344 (SQGRLESFF). Over residues 355 to 364 (KRKETSDKTS) the composition is skewed to basic and acidic residues. Residues 368–379 (ANKKTKAGGKKK) are compositionally biased toward basic residues.

It belongs to the XPG/RAD2 endonuclease family. FEN1 subfamily. Interacts with PCNA. Three molecules of FEN1 bind to one PCNA trimer with each molecule binding to one PCNA monomer. PCNA stimulates the nuclease activity without altering cleavage specificity. Requires Mg(2+) as cofactor. Phosphorylated. Phosphorylation upon DNA damage induces relocalization to the nuclear plasma.

Its subcellular location is the nucleus. The protein resides in the nucleolus. It is found in the nucleoplasm. It localises to the mitochondrion. In terms of biological role, structure-specific nuclease with 5'-flap endonuclease and 5'-3' exonuclease activities involved in DNA replication and repair. During DNA replication, cleaves the 5'-overhanging flap structure that is generated by displacement synthesis when DNA polymerase encounters the 5'-end of a downstream Okazaki fragment. It enters the flap from the 5'-end and then tracks to cleave the flap base, leaving a nick for ligation. Also involved in the long patch base excision repair (LP-BER) pathway, by cleaving within the apurinic/apyrimidinic (AP) site-terminated flap. Acts as a genome stabilization factor that prevents flaps from equilibrating into structures that lead to duplications and deletions. Also possesses 5'-3' exonuclease activity on nicked or gapped double-stranded DNA, and exhibits RNase H activity. Also involved in replication and repair of rDNA and in repairing mitochondrial DNA. The polypeptide is Flap endonuclease 1 (Zea mays (Maize)).